Here is a 366-residue protein sequence, read N- to C-terminus: Cobalt-precorrin-5B C(1)-methyltransferase (366 aa).

This sequence belongs to the CbiD family.

It carries out the reaction Co-precorrin-5B + S-adenosyl-L-methionine = Co-precorrin-6A + S-adenosyl-L-homocysteine. It participates in cofactor biosynthesis; adenosylcobalamin biosynthesis; cob(II)yrinate a,c-diamide from sirohydrochlorin (anaerobic route): step 6/10. Its function is as follows. Catalyzes the methylation of C-1 in cobalt-precorrin-5B to form cobalt-precorrin-6A. This Pseudomonas aeruginosa (strain LESB58) protein is Cobalt-precorrin-5B C(1)-methyltransferase.